A 114-amino-acid chain; its full sequence is Large ribosomal subunit protein P2 (114 aa).

Residues 76–91 (PAAAAAAGGGDSSSAA) are compositionally biased toward low complexity. Positions 76-114 (PAAAAAAGGGDSSSAAKETKKEEPEEEEEDGDMGLSLFD) are disordered.

The protein belongs to the eukaryotic ribosomal protein P1/P2 family. In terms of assembly, P1 and P2 exist as dimers at the large ribosomal subunit. In terms of processing, phosphorylated.

Plays an important role in the elongation step of protein synthesis. The polypeptide is Large ribosomal subunit protein P2 (Eimeria tenella (Coccidian parasite)).